A 374-amino-acid chain; its full sequence is Fatty acid conjugase FAC2 A (374 aa).

2 consecutive transmembrane segments (helical) span residues 50 to 70 and 74 to 94; these read IIVTCILFYVASNYIPMLPGF and IVWPVYWISQGVFLGRLWMIG. The Histidine box-1 signature appears at 95–99; the sequence is HECGH. A Histidine box-2 motif is present at residues 131–135; it reads HRNHH. Helical transmembrane passes span 168–188, 219–239, and 246–266; these read MGLMITMLCKLTFGYAAYIMF, VLFSDVGICIVLYACYRIVMV, and FYVYGIPWVIMSAILFAATYL. The short motif at 306–310 is the Histidine box-3 element; that stretch reads HVIHH.

It belongs to the fatty acid desaturase type 1 family. As to expression, expressed exclusively in the developing seeds. Not detected in leaves or flower buds.

It localises to the microsome membrane. It catalyses the reaction a (9Z,12Z)-octadecadienoyl-containing glycerolipid + AH2 + O2 = a (8E,10E,12Z)-octadecatrienoyl-containing glycerolipid + A + 2 H2O. The protein operates within lipid metabolism; polyunsaturated fatty acid biosynthesis. Functionally, fatty acid conjugase converting 18:2(9Z, 12Z) to calendic acid 18:3(8E, 10E, 12Z). Converts alpha-linolenic acid (18:3(9Z, 12Z, 15Z)) into 18:4(8E, 10E, 12Z, 15Z). Also has weak activity on the mono-unsaturates 16:1(9Z) and 18:1(9Z) producing two conjugated double bonds at delta(8) and delta(10) position. The polypeptide is Fatty acid conjugase FAC2 A (Calendula officinalis (Pot marigold)).